The primary structure comprises 259 residues: MASGDGANGGGGGGQGKLPRKRFYRARAHSNPLSDSHFPIPISPDEVDLSQHYPRYFPSGEGEARQGDAAVPRIRFADVGCGFGGLLVGLSTLFPDTLMIGMELRDKVTEYVKERILALRASNPGKYDNISVVRTNSMKYIPNYFRKAQLSKMFFLFPDPHFKEKNHRRRVISMQLLDEYAYVMEVGGIIYTITDVEELGEWMRSCLEKHPLFEAIPEEETKADPVVKLLSTATEEGQKVARNGGQTFQAIFRRISLQE.

Residues Gly-80, 103 to 104 (EL), 136 to 137 (NS), and Leu-156 contribute to the S-adenosyl-L-methionine site. Residue Asp-159 is part of the active site. Residue 234–236 (TEE) coordinates S-adenosyl-L-methionine.

The protein belongs to the class I-like SAM-binding methyltransferase superfamily. TrmB family.

The protein resides in the nucleus. The enzyme catalyses guanosine(46) in tRNA + S-adenosyl-L-methionine = N(7)-methylguanosine(46) in tRNA + S-adenosyl-L-homocysteine. It participates in tRNA modification; N(7)-methylguanine-tRNA biosynthesis. Catalyzes the formation of N(7)-methylguanine at position 46 (m7G46) in tRNA. In Oryza sativa subsp. indica (Rice), this protein is tRNA (guanine-N(7)-)-methyltransferase.